A 116-amino-acid polypeptide reads, in one-letter code: Large ribosomal subunit protein bL19 (116 aa).

The protein belongs to the bacterial ribosomal protein bL19 family.

Functionally, this protein is located at the 30S-50S ribosomal subunit interface and may play a role in the structure and function of the aminoacyl-tRNA binding site. This Syntrophomonas wolfei subsp. wolfei (strain DSM 2245B / Goettingen) protein is Large ribosomal subunit protein bL19.